The primary structure comprises 271 residues: Elongation factor Ts (271 aa).

The segment at 76–79 (TDFV) is involved in Mg(2+) ion dislocation from EF-Tu.

It belongs to the EF-Ts family.

The protein localises to the cytoplasm. Functionally, associates with the EF-Tu.GDP complex and induces the exchange of GDP to GTP. It remains bound to the aminoacyl-tRNA.EF-Tu.GTP complex up to the GTP hydrolysis stage on the ribosome. The polypeptide is Elongation factor Ts (Mycolicibacterium vanbaalenii (strain DSM 7251 / JCM 13017 / BCRC 16820 / KCTC 9966 / NRRL B-24157 / PYR-1) (Mycobacterium vanbaalenii)).